The sequence spans 299 residues: MDIQEEYMPFRAYQTYYRVVGDLRSPLTPLLLLHGGPGSTHNYFEAFDQLAMATGRPIVMYDQLGCGRSSIPTDPHLWQAATWVAELRALRAYLKLDCVHLLGQSWGGMLALIYLCDDQPRGIQSVILASTLSSAHLWAREQHRLIQFMSTTDQAAIHQAEMTGDFTTPAYLAANERFMIQHATGPITEQTPEFLRRSKRLGTAAYTTAWGPNEYFPTGTLRDYDYTAKLAQLPYPTLVTSGVNDLCTPLVAKTMVDQLPHAEWTLFPHSRHMAFIDEPAAYQARLTQWLAAHDEVTDD.

Positions 29–279 (PLLLLHGGPG…SRHMAFIDEP (251 aa)) constitute an AB hydrolase-1 domain. Residue serine 105 is the Nucleophile of the active site. The active site involves aspartate 245. Residue histidine 272 is the Proton donor of the active site.

It belongs to the peptidase S33 family.

It localises to the cell envelope. It catalyses the reaction Release of N-terminal proline from a peptide.. Releases the N-terminal proline from various substrates. This is Proline iminopeptidase from Levilactobacillus brevis (strain ATCC 367 / BCRC 12310 / CIP 105137 / JCM 1170 / LMG 11437 / NCIMB 947 / NCTC 947) (Lactobacillus brevis).